We begin with the raw amino-acid sequence, 359 residues long: Type-1 angiotensin II receptor A (359 aa).

Topologically, residues Met-1 to Ser-25 are extracellular. Asn-4 is a glycosylation site (N-linked (GlcNAc...) asparagine). Angiotensin II-binding residues include Gln-15 and Asp-17. Cystine bridges form between Cys-18–Cys-274 and Cys-101–Cys-180. A helical membrane pass occupies residues Tyr-26–Phe-55. Residues Tyr-56–Thr-61 lie on the Cytoplasmic side of the membrane. The helical transmembrane segment at Val-62–Ala-89 threads the bilayer. Topologically, residues Met-90–Asn-98 are extracellular. Residues His-99–Asp-125 traverse the membrane as a helical segment. Over Arg-126–Thr-141 the chain is Cytoplasmic. A helical membrane pass occupies residues Met-142–Ile-165. The Extracellular segment spans residues His-166–Thr-190. Arg-167 contributes to the angiotensin II binding site. Asn-176 carries N-linked (GlcNAc...) asparagine glycosylation. Residues Phe-182, His-183, and Tyr-184 each contribute to the angiotensin II site. Residue Asn-188 is glycosylated (N-linked (GlcNAc...) asparagine). The helical transmembrane segment at Leu-191–Thr-216 threads the bilayer. Lys-199 contributes to the angiotensin II binding site. Over Leu-217–Phe-239 the chain is Cytoplasmic. Residues Arg-240 to Leu-268 traverse the membrane as a helical segment. The Extracellular segment spans residues Gly-269 to Asp-278. The helical transmembrane segment at Ile-279–Phe-304 threads the bilayer. Topologically, residues Leu-305 to Glu-359 are cytoplasmic. Positions Leu-337–Ala-349 are enriched in polar residues. Positions Leu-337–Glu-359 are disordered. Cys-355 carries the S-palmitoyl cysteine lipid modification.

The protein belongs to the G-protein coupled receptor 1 family. As to quaternary structure, interacts with MAS1. Interacts with ARRB1. Interacts with FLNA (via filamin repeat 21); increases PKA-mediated phosphorylation of FLNA. In terms of processing, C-terminal Ser or Thr residues may be phosphorylated. As to expression, is expressed in the liver, kidney, aorta, lung, uterus, ovary, spleen, heart, adrenal gland, and vascular smooth muscle cell.

It localises to the cell membrane. In terms of biological role, receptor for angiotensin II, a vasoconstricting peptide, which acts as a key regulator of blood pressure and sodium retention by the kidney. The activated receptor in turn couples to G-alpha proteins G(q) (GNAQ, GNA11, GNA14 or GNA15) and thus activates phospholipase C and increases the cytosolic Ca(2+) concentrations, which in turn triggers cellular responses such as stimulation of protein kinase C. In Rattus norvegicus (Rat), this protein is Type-1 angiotensin II receptor A (Agtr1).